The primary structure comprises 172 residues: Endoribonuclease YbeY (172 aa).

Zn(2+) contacts are provided by His-136, His-140, and His-146.

This sequence belongs to the endoribonuclease YbeY family. Requires Zn(2+) as cofactor.

Its subcellular location is the cytoplasm. Single strand-specific metallo-endoribonuclease involved in late-stage 70S ribosome quality control and in maturation of the 3' terminus of the 16S rRNA. The chain is Endoribonuclease YbeY from Rickettsia canadensis (strain McKiel).